The sequence spans 604 residues: Ribosome-inactivating protein PMRIPm (604 aa).

The first 43 residues, Met1 to Gln43, serve as a signal peptide directing secretion. Glu211 is an active-site residue. 3 cysteine pairs are disulfide-bonded: Cys301–Cys332, Cys348–Cys367, and Cys392–Cys409. Ricin B-type lectin domains follow at residues Gly335–Gly463 and Val466–Val598. One copy of the 1-alpha repeat lies at Ala345–Ser387. The 1-beta repeat unit spans residues Leu389–Asn429. A 1-gamma repeat occupies Ser432 to Asp465. One copy of the 2-alpha repeat lies at Gln477–Ala521. Residues Cys480 and Cys502 are joined by a disulfide bond. N-linked (GlcNAc...) asparagine glycosylation occurs at Asn490. One copy of the 2-beta repeat lies at Arg525–Asn563. One copy of the 2-gamma repeat lies at Ala566–Thr599.

It belongs to the ribosome-inactivating protein family. Type 2 RIP subfamily. As to quaternary structure, disulfide-linked dimer of A and B chains. The precursor is processed in two chains, A and B, that are linked by a disulfide bond. Post-translationally, glycosylated. In terms of processing, the N-terminus is blocked. As to expression, expressed in rhizome and abundantly in leaves (at protein level).

The catalysed reaction is Endohydrolysis of the N-glycosidic bond at one specific adenosine on the 28S rRNA.. Its activity is regulated as follows. Strongly inhibited by asialofetuin and asialomucin. Gal/GalNAc-specific agglutinin. Behaves as a type-2 ribosome-inactivating protein. Inhibits mammalian ribosomes. The A chain is responsible for inhibiting protein synthesis through the catalytic inactivation of 60S ribosomal subunits by removing adenine from position 4,324 of 28S rRNA. The B chain binds to cell receptors and probably facilitates the entry into the cell of the A chain; B chains are also responsible for cell agglutination (lectin activity). Involved in plant defense against insects. Has very low cytotoxic activity against the human tumor cell line Molt4, but higher against CEM. In Polygonatum multiflorum (Solomon's seal), this protein is Ribosome-inactivating protein PMRIPm.